We begin with the raw amino-acid sequence, 355 residues long: Peptide chain release factor 1 (355 aa).

At Q234 the chain carries N5-methylglutamine.

This sequence belongs to the prokaryotic/mitochondrial release factor family. Methylated by PrmC. Methylation increases the termination efficiency of RF1.

The protein localises to the cytoplasm. Peptide chain release factor 1 directs the termination of translation in response to the peptide chain termination codons UAG and UAA. This is Peptide chain release factor 1 from Metamycoplasma arthritidis (strain 158L3-1) (Mycoplasma arthritidis).